Consider the following 122-residue polypeptide: ATP synthase epsilon chain (122 aa).

Residues 97-112 (EDLKSERELTRSRGDA) show a composition bias toward basic and acidic residues. A disordered region spans residues 97-122 (EDLKSERELTRSRGDAALRATRRLNS).

This sequence belongs to the ATPase epsilon chain family. F-type ATPases have 2 components, CF(1) - the catalytic core - and CF(0) - the membrane proton channel. CF(1) has five subunits: alpha(3), beta(3), gamma(1), delta(1), epsilon(1). CF(0) has three main subunits: a, b and c.

It localises to the cell membrane. In terms of biological role, produces ATP from ADP in the presence of a proton gradient across the membrane. This is ATP synthase epsilon chain from Corynebacterium aurimucosum (strain ATCC 700975 / DSM 44827 / CIP 107346 / CN-1) (Corynebacterium nigricans).